The following is a 487-amino-acid chain: Betaine aldehyde dehydrogenase 1 (487 aa).

3 residues coordinate K(+): Ser26, Ile27, and Asp93. An NAD(+)-binding site is contributed by 150 to 152; sequence GAW. Residue Lys162 is the Charge relay system of the active site. NAD(+) is bound by residues 176 to 179 and 229 to 232; these read KPSE and SVPT. Leu244 serves as a coordination point for K(+). Glu250 acts as the Proton acceptor in catalysis. Positions 252, 284, and 384 each coordinate NAD(+). Cys284 (nucleophile) is an active-site residue. Cys284 is subject to Cysteine sulfenic acid (-SOH). Residues Lys454 and Gly457 each coordinate K(+). Catalysis depends on Glu461, which acts as the Charge relay system.

Belongs to the aldehyde dehydrogenase family. In terms of assembly, dimer of dimers. Requires K(+) as cofactor.

The enzyme catalyses betaine aldehyde + NAD(+) + H2O = glycine betaine + NADH + 2 H(+). It participates in amine and polyamine biosynthesis; betaine biosynthesis via choline pathway; betaine from betaine aldehyde: step 1/1. Involved in the biosynthesis of the osmoprotectant glycine betaine. Catalyzes the irreversible oxidation of betaine aldehyde to the corresponding acid. The protein is Betaine aldehyde dehydrogenase 1 of Rhizobium meliloti (strain 1021) (Ensifer meliloti).